A 371-amino-acid polypeptide reads, in one-letter code: Bifunctional chorismate mutase/prephenate dehydratase (371 aa).

A Chorismate mutase domain is found at 1–92 (MTLKNALLAF…DSVLTQKKWI (92 aa)). The substrate site is built by arginine 11, arginine 28, lysine 39, aspartate 48, glutamate 52, serine 84, and glutamine 88. Residues 104 to 284 (KISFLGSFGS…NITQFIILAQ (181 aa)) enclose the Prephenate dehydratase domain. A regulatory region spans residues 285–371 (KKTYITNKKT…IKCIKILGCF (87 aa)).

It localises to the cytoplasm. The enzyme catalyses chorismate = prephenate. It carries out the reaction prephenate + H(+) = 3-phenylpyruvate + CO2 + H2O. It participates in amino-acid biosynthesis; L-phenylalanine biosynthesis; phenylpyruvate from prephenate: step 1/1. Its pathway is metabolic intermediate biosynthesis; prephenate biosynthesis; prephenate from chorismate: step 1/1. Functionally, catalyzes the Claisen rearrangement of chorismate to prephenate and the decarboxylation/dehydration of prephenate to phenylpyruvate. This is Bifunctional chorismate mutase/prephenate dehydratase (pheA) from Buchnera aphidicola subsp. Baizongia pistaciae (strain Bp).